The primary structure comprises 348 residues: Dihydroorotase (348 aa).

Residues His-17 and His-19 each contribute to the Zn(2+) site. Substrate contacts are provided by residues His-19 to Arg-21 and Asn-45. 3 residues coordinate Zn(2+): Lys-103, His-140, and His-178. Lys-103 carries the N6-carboxylysine modification. His-140 serves as a coordination point for substrate. Position 223 (Leu-223) interacts with substrate. Asp-251 provides a ligand contact to Zn(2+). Residue Asp-251 is part of the active site. Substrate is bound by residues His-255 and Ala-267.

Belongs to the metallo-dependent hydrolases superfamily. DHOase family. Class II DHOase subfamily. As to quaternary structure, homodimer. It depends on Zn(2+) as a cofactor.

It catalyses the reaction (S)-dihydroorotate + H2O = N-carbamoyl-L-aspartate + H(+). It functions in the pathway pyrimidine metabolism; UMP biosynthesis via de novo pathway; (S)-dihydroorotate from bicarbonate: step 3/3. Functionally, catalyzes the reversible cyclization of carbamoyl aspartate to dihydroorotate. This Enterobacter sp. (strain 638) protein is Dihydroorotase.